Consider the following 651-residue polypeptide: MANSILLFSFVLVLPFVCSVQFNISRFGSDVSEIAYQGDARANGAVELTNIDYTCRAGWATYGKQVPLWNPGTSKPSDFSTRFSFRIDTRNVGYGNYGHGFAFFLAPARIQLPPNSAGGFLGLFNGTNNQSSAFPLVYVEFDTFTNPEWDPLDVKSHVGINNNSLVSSNYTSWNATSHNQDIGRVLIFYDSARRNLSVSWTYDLTSDPLENSSLSYIIDLSKVLPSEVTIGFSATSGGVTEGNRLLSWEFSSSLELIDIKKSQNDKKGMIIGISVSGFVLLTFFITSLIVFLKRKQQKKKAEETENLTSINEDLERGAGPRKFTYKDLASAANNFADDRKLGEGGFGAVYRGYLNSLDMMVAIKKFAGGSKQGKREFVTEVKIISSLRHRNLVQLIGWCHEKDEFLMIYEFMPNGSLDAHLFGKKPHLAWHVRCKITLGLASALLYLHEEWEQCVVHRDIKASNVMLDSNFNAKLGDFGLARLMDHELGPQTTGLAGTFGYMAPEYISTGRASKESDVYSFGVVTLEIVTGRKSVDRRQGRVEPVTNLVEKMWDLYGKGEVITAIDEKLRIGGFDEKQAECLMIVGLWCAHPDVNTRPSIKQAIQVLNLEAPVPHLPTKMPVATYHVSSSNTTSVSSGGATVTFSSAQHGR.

The first 19 residues, methionine 1–serine 19, serve as a signal peptide directing secretion. Residues valine 20–serine 251 are legume-lectin like. Residues valine 20 to methionine 269 are Extracellular-facing. N-linked (GlcNAc...) asparagine glycosylation is found at asparagine 23, asparagine 125, asparagine 129, asparagine 162, asparagine 169, asparagine 174, asparagine 195, and asparagine 211. Residues isoleucine 270–valine 290 form a helical membrane-spanning segment. At phenylalanine 291–arginine 651 the chain is on the cytoplasmic side. The 282-residue stretch at phenylalanine 335–leucine 616 folds into the Protein kinase domain. Residues leucine 341–valine 349 and lysine 364 contribute to the ATP site. Aspartate 459 serves as the catalytic Proton acceptor. Positions serine 630–arginine 651 are disordered.

It in the C-terminal section; belongs to the protein kinase superfamily. Ser/Thr protein kinase family. This sequence in the N-terminal section; belongs to the leguminous lectin family. In terms of assembly, interacts with ABCG40.

Its subcellular location is the cell membrane. The enzyme catalyses L-seryl-[protein] + ATP = O-phospho-L-seryl-[protein] + ADP + H(+). It catalyses the reaction L-threonyl-[protein] + ATP = O-phospho-L-threonyl-[protein] + ADP + H(+). Promotes hydrogen peroxide H(2)O(2) production and cell death. In terms of biological role, involved in resistance response to the pathogenic oomycetes Phytophthora infestans and Phytophthora capsici. The sequence is that of L-type lectin-domain containing receptor kinase IX.1 from Arabidopsis thaliana (Mouse-ear cress).